A 414-amino-acid polypeptide reads, in one-letter code: Mannan endo-1,4-beta-mannosidase 3 (414 aa).

Positions 1 to 19 (MKCLCFVVLLAILIAQNSS) are cleaved as a signal peptide. Residues asparagine 17 and asparagine 75 are each glycosylated (N-linked (GlcNAc...) asparagine). Tryptophan 87 is a substrate binding site. Asparagine 133 and asparagine 153 each carry an N-linked (GlcNAc...) asparagine glycan. Substrate is bound at residue asparagine 202. Glutamate 203 functions as the Proton donor in the catalytic mechanism. Tyrosine 283 lines the substrate pocket. Glutamate 323 functions as the Nucleophile in the catalytic mechanism. N-linked (GlcNAc...) asparagine glycosylation occurs at asparagine 343. Tryptophan 365 is a substrate binding site. N-linked (GlcNAc...) asparagine glycosylation occurs at asparagine 386.

This sequence belongs to the glycosyl hydrolase 5 (cellulase A) family. In terms of tissue distribution, expressed in leaves, flowers, siliques and seeds.

It is found in the secreted. It carries out the reaction Random hydrolysis of (1-&gt;4)-beta-D-mannosidic linkages in mannans, galactomannans and glucomannans.. The chain is Mannan endo-1,4-beta-mannosidase 3 (MAN3) from Arabidopsis thaliana (Mouse-ear cress).